The primary structure comprises 299 residues: MLFQEIIFKLNEFWHNQGCIIQQPYDIEVGAGTMNPATFFRVLGPEPWYVAYVEPSRRPTDGRYGENPNRLQHYYQYQVILKPSPADVQEIYIESLKYLGIEIEKHDIRFVEDNWESPTLGAWGIGWEVWLDGMEITQFTYFQQCGGFDLFPVSAEITYGLERIAMYIQGVDDFKAIKWQDNVTYGDVHLQSEVENCIYNFELADVERLRLLFNEYEKEAERLLNQGLTFPAYDYVLKCSHTFNLLDARGAISVVQRSQYISRIRRLAARAAENYLKSREALGFPLLNKAWRKEEARLG.

This sequence belongs to the class-II aminoacyl-tRNA synthetase family. Tetramer of two alpha and two beta subunits.

It localises to the cytoplasm. The enzyme catalyses tRNA(Gly) + glycine + ATP = glycyl-tRNA(Gly) + AMP + diphosphate. The polypeptide is Glycine--tRNA ligase alpha subunit (Dictyoglomus turgidum (strain DSM 6724 / Z-1310)).